A 121-amino-acid chain; its full sequence is Large ribosomal subunit protein uL14 (121 aa).

The protein belongs to the universal ribosomal protein uL14 family. In terms of assembly, part of the 50S ribosomal subunit. Forms a cluster with proteins L3 and L19. In the 70S ribosome, L14 and L19 interact and together make contacts with the 16S rRNA in bridges B5 and B8.

Functionally, binds to 23S rRNA. Forms part of two intersubunit bridges in the 70S ribosome. The sequence is that of Large ribosomal subunit protein uL14 from Pseudoalteromonas atlantica (strain T6c / ATCC BAA-1087).